The chain runs to 273 residues: ComE operon protein 4 (273 aa).

The protein belongs to the pyrroline-5-carboxylate reductase family.

In terms of biological role, dispensable for transformability. Not known if it can act as a pyrroline-5-carboxylate reductase. The chain is ComE operon protein 4 (comER) from Bacillus subtilis (strain 168).